The sequence spans 341 residues: tRNA N6-adenosine threonylcarbamoyltransferase (341 aa).

Fe cation is bound by residues His111 and His115. Substrate is bound by residues 134–138 (LVSGG), Asp167, Gly180, and Asn276. Asp304 contacts Fe cation.

This sequence belongs to the KAE1 / TsaD family. The cofactor is Fe(2+).

Its subcellular location is the cytoplasm. The enzyme catalyses L-threonylcarbamoyladenylate + adenosine(37) in tRNA = N(6)-L-threonylcarbamoyladenosine(37) in tRNA + AMP + H(+). In terms of biological role, required for the formation of a threonylcarbamoyl group on adenosine at position 37 (t(6)A37) in tRNAs that read codons beginning with adenine. Is involved in the transfer of the threonylcarbamoyl moiety of threonylcarbamoyl-AMP (TC-AMP) to the N6 group of A37, together with TsaE and TsaB. TsaD likely plays a direct catalytic role in this reaction. The sequence is that of tRNA N6-adenosine threonylcarbamoyltransferase from Pseudomonas putida (strain ATCC 47054 / DSM 6125 / CFBP 8728 / NCIMB 11950 / KT2440).